The chain runs to 425 residues: SRRM2 protein homolog rsr-2 (425 aa).

One can recognise a CWF21 domain in the interval Met-57 to Gln-100. Disordered regions lie at residues Asp-109–Met-131 and Glu-161–Glu-425. The segment covering Leu-164–Arg-178 has biased composition (basic and acidic residues). Residues Ser-189–Ser-202 show a composition bias toward low complexity. The span at Arg-210–Lys-221 shows a compositional bias: basic residues. 2 stretches are compositionally biased toward basic and acidic residues: residues Leu-222–Pro-251 and Asp-259–Thr-305. Over residues Val-306–Gln-317 the composition is skewed to basic residues. Composition is skewed to basic and acidic residues over residues Ser-321–Asp-332, Ser-355–Pro-366, and Arg-383–Ser-398. Positions Ser-399–Glu-425 are enriched in low complexity.

The protein belongs to the CWC21 family. As to quaternary structure, interacts with RNA polymerase II subunit ama-1, binding to both hyperphosphorylated and hypophosphorylated forms, but more strongly when ama-1 is phosphorylated at 'Ser-5' of the C-terminal heptapeptide repeat. Interacts with pre-mRNA-processing factor prp-19. May also interact with pre-mRNA-splicing factor 8 homolog prp-8. As to expression, expressed in the proximal germline, but not in the most distal part where mitosis takes place. May be expressed ubiquitously in somatic cells.

It localises to the nucleus. The protein resides in the chromosome. Its subcellular location is the nuclear body. Functionally, plays a role in pre-mRNA splicing as component of the spliceosome. Involved in modulating global transcription, probably acting via interaction with RNA polymerase II. Influences the chromatin distribution and phosphorylation state of RNA polymerase II subunit ama-1. Involved in regulating the germline sex determination pathway. The polypeptide is SRRM2 protein homolog rsr-2 (Caenorhabditis elegans).